A 36-amino-acid polypeptide reads, in one-letter code: Dolichyl-diphosphooligosaccharide--protein glycosyltransferase subunit 2 (36 aa).

The protein belongs to the SWP1 family. In terms of assembly, component of the oligosaccharyltransferase (OST) complex.

The protein localises to the endoplasmic reticulum. The protein resides in the endoplasmic reticulum membrane. It participates in protein modification; protein glycosylation. Functionally, subunit of the oligosaccharyl transferase (OST) complex that catalyzes the initial transfer of a defined glycan (Glc(3)Man(9)GlcNAc(2) in eukaryotes) from the lipid carrier dolichol-pyrophosphate to an asparagine residue within an Asn-X-Ser/Thr consensus motif in nascent polypeptide chains, the first step in protein N-glycosylation. N-glycosylation occurs cotranslationally and the complex associates with the Sec61 complex at the channel-forming translocon complex that mediates protein translocation across the endoplasmic reticulum (ER). All subunits are required for a maximal enzyme activity. This is Dolichyl-diphosphooligosaccharide--protein glycosyltransferase subunit 2 from Gallus gallus (Chicken).